The following is a 298-amino-acid chain: Ketohexokinase (298 aa).

Residues Asp15, Gly41, Asn42, and Asn45 each coordinate beta-D-fructose. ATP-binding positions include Arg108, 226–229 (AEEG), and 255–258 (GAGD). Residue Asp258 coordinates beta-D-fructose.

The protein belongs to the carbohydrate kinase PfkB family. As to quaternary structure, homodimer.

It catalyses the reaction beta-D-fructose + ATP = beta-D-fructose 1-phosphate + ADP + H(+). It functions in the pathway carbohydrate metabolism; fructose metabolism. With respect to regulation, requires potassium. Inhibition by ADP. Catalyzes the phosphorylation of the ketose sugar fructose to fructose-1-phosphate. The sequence is that of Ketohexokinase from Mus musculus (Mouse).